A 298-amino-acid chain; its full sequence is Acidic endochitinase (298 aa).

An N-terminal signal peptide occupies residues 1–29 (MKPNMACLKQVSALLLPLLFISFFKPSHA). Positions 30–298 (GGISVYWGQN…GYSGAIIGSV (269 aa)) constitute a GH18 domain. 2 disulfides stabilise this stretch: cysteine 49–cysteine 96 and cysteine 79–cysteine 86. Glutamate 156 acts as the Proton donor in catalysis. The cysteines at positions 185 and 214 are disulfide-linked.

The protein belongs to the glycosyl hydrolase 18 family. Chitinase class II subfamily.

Its subcellular location is the secreted. The protein resides in the extracellular space. It catalyses the reaction Random endo-hydrolysis of N-acetyl-beta-D-glucosaminide (1-&gt;4)-beta-linkages in chitin and chitodextrins.. This protein functions as a defense against chitin containing fungal pathogens. This chain is Acidic endochitinase, found in Phaseolus angularis (Azuki bean).